Reading from the N-terminus, the 101-residue chain is Putative pterin-4-alpha-carbinolamine dehydratase (101 aa).

It belongs to the pterin-4-alpha-carbinolamine dehydratase family.

The catalysed reaction is (4aS,6R)-4a-hydroxy-L-erythro-5,6,7,8-tetrahydrobiopterin = (6R)-L-erythro-6,7-dihydrobiopterin + H2O. The sequence is that of Putative pterin-4-alpha-carbinolamine dehydratase from Streptomyces coelicolor (strain ATCC BAA-471 / A3(2) / M145).